The following is a 453-amino-acid chain: Gastrin/cholecystokinin type B receptor (453 aa).

Residues 1–57 lie on the Extracellular side of the membrane; sequence MELLKLNRSAQGSGAGPGASLCRAGGALLNSSGAGNLSCEPPRLRGAGTRELELAIR. Residues Asn-7, Asn-30, and Asn-36 are each glycosylated (N-linked (GlcNAc...) asparagine). Residues 58–79 form a helical membrane-spanning segment; that stretch reads VTLYAVIFLMSVGGNVLIIVVL. Residues 80–87 lie on the Cytoplasmic side of the membrane; the sequence is GLSRRLRT. The helical transmembrane segment at 88–109 threads the bilayer; sequence VTNAFLLSLAVSDLLLAVACMP. At 110–131 the chain is on the extracellular side; sequence FTLLPNLMGTFIFGTVVCKAVS. Cysteines 127 and 206 form a disulfide. Residues 132-150 form a helical membrane-spanning segment; it reads YLMGVSVSVSTLSLVAIAL. Residues 151 to 170 lie on the Cytoplasmic side of the membrane; that stretch reads ERYSAICRPLQARVWQTRSH. Residues 171–189 form a helical membrane-spanning segment; sequence AARVIIATWMLSGLLMVPY. Topologically, residues 190–220 are extracellular; sequence PVYTAVQPAGGARALQCVHRWPSARVRQTWS. The helical transmembrane segment at 221–243 threads the bilayer; the sequence is VLLLLLLFFVPGVVMAVAYGLIS. Over 244–339 the chain is Cytoplasmic; that stretch reads RELYLGLRFD…KLLAKKRVVR (96 aa). The interval 258–286 is disordered; that stretch reads SESRVRSQGGLRGGAGPGPAPPNGSCRPE. Residues 340 to 361 traverse the membrane as a helical segment; it reads MLLVIVVLFFLCWLPLYSANTW. Residues 362 to 379 lie on the Extracellular side of the membrane; it reads RAFDSSGAHRALSGAPIS. The helical transmembrane segment at 380-400 threads the bilayer; that stretch reads FIHLLSYASACVNPLVYCFMH. At 401 to 453 the chain is on the cytoplasmic side; that stretch reads RRFRQACLETCARCCPRPPRARPRPLPDEDPPTPSIASLSRLSYTTISTLGPG. Residue Cys-414 is the site of S-palmitoyl cysteine attachment. The segment at 422 to 453 is disordered; it reads RPRPLPDEDPPTPSIASLSRLSYTTISTLGPG. The span at 435 to 453 shows a compositional bias: polar residues; the sequence is SIASLSRLSYTTISTLGPG.

The protein belongs to the G-protein coupled receptor 1 family. Parietal cells, pancreas, brain and various neoplastic tissues.

The protein resides in the cell membrane. Receptor for gastrin and cholecystokinin. The CCK-B receptors occur throughout the central nervous system where they modulate anxiety, analgesia, arousal, and neuroleptic activity. This receptor mediates its action by association with G proteins that activate a phosphatidylinositol-calcium second messenger system. This chain is Gastrin/cholecystokinin type B receptor (CCKBR), found in Canis lupus familiaris (Dog).